Here is a 506-residue protein sequence, read N- to C-terminus: 5-OH-xanthotoxin synthase (506 aa).

Residues 3 to 23 (PVVIFLVLAFPIASVYLLFYH) traverse the membrane as a helical segment. The interval 365 to 370 (TGPLLI) is substrate specificity. Cys-446 lines the heme pocket.

The protein belongs to the cytochrome P450 family. The cofactor is heme.

The protein localises to the microsome membrane. It catalyses the reaction xanthotoxin + reduced [NADPH--hemoprotein reductase] + O2 = 5-hydroxyxanthotoxin + oxidized [NADPH--hemoprotein reductase] + H2O + 2 H(+). Its pathway is secondary metabolite biosynthesis. Involved in the biosynthesis of coumarins and furanocoumarins (FCs), natural products required for defense responses against attacks by predators with potential medical and agroindustrial usages such as anticoagulant, rodenticide and artificial vanilla substitutes. Catalyzes the conversion of xanthotoxin into 5-hydroxyxanthotoxin. The chain is 5-OH-xanthotoxin synthase from Pastinaca sativa (Wild parsnip).